A 104-amino-acid chain; its full sequence is Nucleoid-associated protein PEPE_1483 (104 aa).

Positions 1–35 (MRGGMGNMQSMMRQMQKMQKKVTEEQEKLNQTEFT) are disordered. Residues 8-17 (MQSMMRQMQK) show a composition bias toward low complexity. Over residues 21-30 (KVTEEQEKLN) the composition is skewed to basic and acidic residues.

Belongs to the YbaB/EbfC family. As to quaternary structure, homodimer.

The protein localises to the cytoplasm. Its subcellular location is the nucleoid. Binds to DNA and alters its conformation. May be involved in regulation of gene expression, nucleoid organization and DNA protection. In Pediococcus pentosaceus (strain ATCC 25745 / CCUG 21536 / LMG 10740 / 183-1w), this protein is Nucleoid-associated protein PEPE_1483.